Here is an 811-residue protein sequence, read N- to C-terminus: Serine/threonine-protein kinase prpf4B (811 aa).

4 disordered regions span residues 1–257, 288–341, 353–379, and 408–452; these read MVIE…TNEP, EKYN…NQIE, KDQN…EDLK, and VSIK…TNGG. Over residues 46–71 the composition is skewed to low complexity; it reads SSPASRETSSSKLMSPSKNQSSSSSR. Residues 81–202 are compositionally biased toward basic and acidic residues; sequence RRKDERYSSS…DNMDSRDNKN (122 aa). The segment covering 203–215 has biased composition (polar residues); it reads GSRQSINNNTLSY. The span at 217 to 240 shows a compositional bias: basic and acidic residues; that stretch reads KQADRKDEVRVKDNISVNDDKTNH. Polar residues-rich tracts occupy residues 241–257 and 293–302; these read GENL…TNEP and EQPQPITSSL. The span at 310-327 shows a compositional bias: low complexity; it reads SNTNTNSNSTPVATTTTS. The Protein kinase domain occupies 490–808; sequence YQIFSPIGSG…PFEALNHEFL (319 aa). ATP-binding positions include 496–504 and Lys-519; that span reads IGSGVFSTV. Residue Asp-619 is the Proton acceptor of the active site.

This sequence belongs to the protein kinase superfamily. CMGC Ser/Thr protein kinase family. Phosphorylated. Autophosphorylated; phosphorylation inhibits interaction with its targets.

The protein resides in the nucleus. Its subcellular location is the chromosome. The protein localises to the centromere. It is found in the kinetochore. The enzyme catalyses L-seryl-[protein] + ATP = O-phospho-L-seryl-[protein] + ADP + H(+). The catalysed reaction is L-threonyl-[protein] + ATP = O-phospho-L-threonyl-[protein] + ADP + H(+). Its function is as follows. Serine/threonine kinase involved in spliceosomal assembly as well as mitosis and signaling regulation. The polypeptide is Serine/threonine-protein kinase prpf4B (prp4k) (Dictyostelium discoideum (Social amoeba)).